The primary structure comprises 274 residues: uncharacterized protein (274 aa).

A coiled-coil region spans residues 99-206 (NNVISGYVDL…ESEMEIFIQK (108 aa)).

This is an uncharacterized protein from Dictyostelium discoideum (Social amoeba).